Reading from the N-terminus, the 261-residue chain is Short-chain dehydrogenase/reductase AFUA_1G00990 (261 aa).

NADP(+) is bound by residues leucine 19, aspartate 67, asparagine 94, tyrosine 169, lysine 173, and threonine 213. Tyrosine 169 functions as the Proton donor in the catalytic mechanism. The active-site Lowers pKa of active site Tyr is lysine 173.

This sequence belongs to the short-chain dehydrogenases/reductases (SDR) family.

Short-chain dehydrogenase/reductase; part of the gene cluster that mediates the biosynthesis of fumigermin that inhibits germination of spores of the inducing S.rapamycinicus, and thus helps the fungus to defend resources in the shared habitat against a bacterial competitor. The partially reducing polyketide synthase fngA alone is sufficient for the production of fumigermin. FgnA catalyzes the condensation of 3 malonyl-CoA units to an acetyl-CoA starter, and 3 methylations to yield fumigermin. It is remarkable that the five cluster genes including fgnA are conserved in distantly related fungi, supporting the assumption of a fumigermin cluster; it is thus possible that originally all five genes were functional, but that the genes encoding tailoring enzymes became inactive from mutations, similar to the case of the fgnA gene in strains A1163 and Af293. The sequence is that of Short-chain dehydrogenase/reductase AFUA_1G00990 from Aspergillus fumigatus (strain ATCC MYA-4609 / CBS 101355 / FGSC A1100 / Af293) (Neosartorya fumigata).